The primary structure comprises 541 residues: Eukaryotic translation initiation factor 3 subunit D-1 (541 aa).

Residues 98–136 (VQKPPHQRGRFRNMRGRGGRGRNPRGGLNNHHHHGMTTL) form a disordered region. A compositionally biased stretch (basic residues) spans 100–120 (KPPHQRGRFRNMRGRGGRGRN).

This sequence belongs to the eIF-3 subunit D family. In terms of assembly, component of the eukaryotic translation initiation factor 3 (eIF-3) complex. The eIF-3 complex interacts with pix.

It localises to the cytoplasm. Its function is as follows. mRNA cap-binding component of the eukaryotic translation initiation factor 3 (eIF-3) complex, which is involved in protein synthesis of a specialized repertoire of mRNAs and, together with other initiation factors, stimulates binding of mRNA and methionyl-tRNAi to the 40S ribosome. The eIF-3 complex specifically targets and initiates translation of a subset of mRNAs involved in cell proliferation. In the eIF-3 complex, eif3d specifically recognizes and binds the 7-methylguanosine cap of a subset of mRNAs. The chain is Eukaryotic translation initiation factor 3 subunit D-1 from Drosophila persimilis (Fruit fly).